Here is a 518-residue protein sequence, read N- to C-terminus: Glutamate--cysteine ligase (518 aa).

It belongs to the glutamate--cysteine ligase type 1 family. Type 1 subfamily.

It carries out the reaction L-cysteine + L-glutamate + ATP = gamma-L-glutamyl-L-cysteine + ADP + phosphate + H(+). It participates in sulfur metabolism; glutathione biosynthesis; glutathione from L-cysteine and L-glutamate: step 1/2. The polypeptide is Glutamate--cysteine ligase (gshA) (Buchnera aphidicola subsp. Acyrthosiphon pisum (strain APS) (Acyrthosiphon pisum symbiotic bacterium)).